Consider the following 346-residue polypeptide: NADH-quinone oxidoreductase subunit H 2 (346 aa).

8 helical membrane passes run 14–34 (IAMVLKVLVVFVFVLLTVAYA), 83–103 (FAFLIAPLIALVPAFIGFAVI), 136–156 (VGVLYILALASIGVYGIVLAG), 172–192 (SAQMISYELAAGLAIISVFML), 208–228 (GAWYAFKQPLAFILFFICSIA), 260–280 (FFMAEYANMVTVCAVTTTLFL), 289–309 (LPGWFWFIAKVYFLIFTCMWI), and 324–344 (LGWKVFLPLTLINIVVTGIIV).

Belongs to the complex I subunit 1 family. As to quaternary structure, NDH-1 is composed of 14 different subunits. Subunits NuoA, H, J, K, L, M, N constitute the membrane sector of the complex.

The protein localises to the cell inner membrane. It catalyses the reaction a quinone + NADH + 5 H(+)(in) = a quinol + NAD(+) + 4 H(+)(out). In terms of biological role, NDH-1 shuttles electrons from NADH, via FMN and iron-sulfur (Fe-S) centers, to quinones in the respiratory chain. The immediate electron acceptor for the enzyme in this species is believed to be ubiquinone. Couples the redox reaction to proton translocation (for every two electrons transferred, four hydrogen ions are translocated across the cytoplasmic membrane), and thus conserves the redox energy in a proton gradient. This subunit may bind ubiquinone. The sequence is that of NADH-quinone oxidoreductase subunit H 2 from Geobacter metallireducens (strain ATCC 53774 / DSM 7210 / GS-15).